The chain runs to 469 residues: Cysteine--tRNA ligase (469 aa).

Cysteine 33 provides a ligand contact to Zn(2+). A 'HIGH' region motif is present at residues 35 to 45; that stretch reads PTVYNLLHIGN. The Zn(2+) site is built by cysteine 214, histidine 239, and glutamate 243. Positions 271–275 match the 'KMSKS' region motif; that stretch reads KMSKS. Residue lysine 274 coordinates ATP.

This sequence belongs to the class-I aminoacyl-tRNA synthetase family. In terms of assembly, monomer. The cofactor is Zn(2+).

The protein localises to the cytoplasm. It carries out the reaction tRNA(Cys) + L-cysteine + ATP = L-cysteinyl-tRNA(Cys) + AMP + diphosphate. This chain is Cysteine--tRNA ligase, found in Petrotoga mobilis (strain DSM 10674 / SJ95).